Here is a 250-residue protein sequence, read N- to C-terminus: 1-(5-phosphoribosyl)-5-[(5-phosphoribosylamino)methylideneamino] imidazole-4-carboxamide isomerase (250 aa).

Asp7 functions as the Proton acceptor in the catalytic mechanism. Catalysis depends on Asp129, which acts as the Proton donor.

Belongs to the HisA/HisF family.

Its subcellular location is the cytoplasm. It catalyses the reaction 1-(5-phospho-beta-D-ribosyl)-5-[(5-phospho-beta-D-ribosylamino)methylideneamino]imidazole-4-carboxamide = 5-[(5-phospho-1-deoxy-D-ribulos-1-ylimino)methylamino]-1-(5-phospho-beta-D-ribosyl)imidazole-4-carboxamide. The protein operates within amino-acid biosynthesis; L-histidine biosynthesis; L-histidine from 5-phospho-alpha-D-ribose 1-diphosphate: step 4/9. This Shewanella denitrificans (strain OS217 / ATCC BAA-1090 / DSM 15013) protein is 1-(5-phosphoribosyl)-5-[(5-phosphoribosylamino)methylideneamino] imidazole-4-carboxamide isomerase.